Here is a 445-residue protein sequence, read N- to C-terminus: Exodeoxyribonuclease 7 large subunit (445 aa).

Belongs to the XseA family. Heterooligomer composed of large and small subunits.

The protein localises to the cytoplasm. The enzyme catalyses Exonucleolytic cleavage in either 5'- to 3'- or 3'- to 5'-direction to yield nucleoside 5'-phosphates.. In terms of biological role, bidirectionally degrades single-stranded DNA into large acid-insoluble oligonucleotides, which are then degraded further into small acid-soluble oligonucleotides. This Shewanella pealeana (strain ATCC 700345 / ANG-SQ1) protein is Exodeoxyribonuclease 7 large subunit.